Reading from the N-terminus, the 213-residue chain is NADH dehydrogenase [ubiquinone] iron-sulfur protein 7, mitochondrial (213 aa).

A mitochondrion-targeting transit peptide spans 1 to 38; it reads MAVLSAPGLRGFRILGLRSSVGPAVQARGVHQSVATDG. The tract at residues 31 to 53 is disordered; it reads HQSVATDGPSSTQPALPKARAVA. Residues 33-44 are compositionally biased toward polar residues; it reads SVATDGPSSTQP. Residues Cys-88 and Cys-89 each contribute to the [4Fe-4S] cluster site. Arg-111 is subject to Hydroxyarginine. Cys-153 and Cys-183 together coordinate [4Fe-4S] cluster.

The protein belongs to the complex I 20 kDa subunit family. Core subunit of respiratory chain NADH dehydrogenase (Complex I) which is composed of 45 different subunits. This is a component of the iron-sulfur (IP) fragment of the enzyme. [4Fe-4S] cluster is required as a cofactor. Post-translationally, hydroxylated at Arg-111 by NDUFAF5 early in the pathway of assembly of complex I, before the formation of the juncture between peripheral and membrane arms.

Its subcellular location is the mitochondrion inner membrane. It carries out the reaction a ubiquinone + NADH + 5 H(+)(in) = a ubiquinol + NAD(+) + 4 H(+)(out). Core subunit of the mitochondrial membrane respiratory chain NADH dehydrogenase (Complex I) which catalyzes electron transfer from NADH through the respiratory chain, using ubiquinone as an electron acceptor. Essential for the catalytic activity of complex I. The chain is NADH dehydrogenase [ubiquinone] iron-sulfur protein 7, mitochondrial (NDUFS7) from Homo sapiens (Human).